A 516-amino-acid polypeptide reads, in one-letter code: Multicopper oxidase CueO (516 aa).

The segment at residues 1-28 is a signal peptide (tat-type signal); sequence MQRRDFLKYSVALGVASALPLWSRAVFA. Plastocyanin-like domains follow at residues 55–165, 227–292, and 399–516; these read GQST…IEDD, PRGW…DNKP, and GGKF…GFTV. Cu cation-binding residues include H101, H103, H141, and H143. Positions 443, 446, 448, 499, 500, 501, and 505 each coordinate Cu cation.

The protein belongs to the multicopper oxidase family. As to quaternary structure, monomer. Requires Cu cation as cofactor. Predicted to be exported by the Tat system. The position of the signal peptide cleavage has not been experimentally proven.

It is found in the periplasm. The enzyme catalyses 4 Cu(+) + O2 + 4 H(+) = 4 Cu(2+) + 2 H2O. Functionally, multicopper oxidase involved in copper homeostasis and copper tolerance under aerobic conditions. Is responsible for the oxidation of Cu(+) to the less harmful Cu(2+) in the periplasm, thereby preventing Cu(+) from entering the cytoplasm. The chain is Multicopper oxidase CueO (cueO) from Escherichia coli O157:H7.